Here is a 126-residue protein sequence, read N- to C-terminus: Holo-[acyl-carrier-protein] synthase (126 aa).

Mg(2+) contacts are provided by Asp-8 and Glu-60.

The protein belongs to the P-Pant transferase superfamily. AcpS family. Mg(2+) serves as cofactor.

It localises to the cytoplasm. It catalyses the reaction apo-[ACP] + CoA = holo-[ACP] + adenosine 3',5'-bisphosphate + H(+). Functionally, transfers the 4'-phosphopantetheine moiety from coenzyme A to a Ser of acyl-carrier-protein. The protein is Holo-[acyl-carrier-protein] synthase of Ehrlichia canis (strain Jake).